The chain runs to 428 residues: MNDSNKLYDLAQCFIPGGVNSPVRAFQGVDGKPFFVEKAGGAYLYDVDGRAYIDYVGSWGPMILGHRHPVICDALTKAIENGISFGAPTEIEVKMAQLLTQLMPSMDMVRMVNSGTEATMSAIRLARGFTKRDKIIKFEGCYHGHSDCLLVKAGSGALTLGQADSPGVPKDFAQHTLICTYNDLSSVRKNLEDYPKEVAAIIVEPVAGNMNCILPSENFLPGLRQLCDEFGALLIMDEVMTGFRVALGGAQEYYNIKPDLTCLGKIIGGGMPVAAFGGRKEVMSILAPLGPVYQAETLSGHPLGMAAGFACLTELARPGLHKKLTELTTLLVLNLKKAAQEHNIPLIINHLGGMFGFFFTDAKTVTCYEDVKKCNIERFKRFFYFMLKEGIYFAPSAFEAGFMSLAHGVEEIEKTISSARRCFAQSRF.

N6-(pyridoxal phosphate)lysine is present on lysine 265.

It belongs to the class-III pyridoxal-phosphate-dependent aminotransferase family. HemL subfamily. As to quaternary structure, homodimer. Requires pyridoxal 5'-phosphate as cofactor.

The protein resides in the cytoplasm. The catalysed reaction is (S)-4-amino-5-oxopentanoate = 5-aminolevulinate. It functions in the pathway porphyrin-containing compound metabolism; protoporphyrin-IX biosynthesis; 5-aminolevulinate from L-glutamyl-tRNA(Glu): step 2/2. The sequence is that of Glutamate-1-semialdehyde 2,1-aminomutase from Hamiltonella defensa subsp. Acyrthosiphon pisum (strain 5AT).